The sequence spans 142 residues: Large ribosomal subunit protein uL11 (142 aa).

The protein belongs to the universal ribosomal protein uL11 family. In terms of assembly, part of the ribosomal stalk of the 50S ribosomal subunit. Interacts with L10 and the large rRNA to form the base of the stalk. L10 forms an elongated spine to which L12 dimers bind in a sequential fashion forming a multimeric L10(L12)X complex. One or more lysine residues are methylated.

Functionally, forms part of the ribosomal stalk which helps the ribosome interact with GTP-bound translation factors. In Mycolicibacterium vanbaalenii (strain DSM 7251 / JCM 13017 / BCRC 16820 / KCTC 9966 / NRRL B-24157 / PYR-1) (Mycobacterium vanbaalenii), this protein is Large ribosomal subunit protein uL11.